The sequence spans 156 residues: ATP synthase subunit b (156 aa).

The helical transmembrane segment at leucine 7–leucine 29 threads the bilayer.

Belongs to the ATPase B chain family. In terms of assembly, F-type ATPases have 2 components, F(1) - the catalytic core - and F(0) - the membrane proton channel. F(1) has five subunits: alpha(3), beta(3), gamma(1), delta(1), epsilon(1). F(0) has three main subunits: a(1), b(2) and c(10-14). The alpha and beta chains form an alternating ring which encloses part of the gamma chain. F(1) is attached to F(0) by a central stalk formed by the gamma and epsilon chains, while a peripheral stalk is formed by the delta and b chains.

The protein localises to the cell inner membrane. F(1)F(0) ATP synthase produces ATP from ADP in the presence of a proton or sodium gradient. F-type ATPases consist of two structural domains, F(1) containing the extramembraneous catalytic core and F(0) containing the membrane proton channel, linked together by a central stalk and a peripheral stalk. During catalysis, ATP synthesis in the catalytic domain of F(1) is coupled via a rotary mechanism of the central stalk subunits to proton translocation. Functionally, component of the F(0) channel, it forms part of the peripheral stalk, linking F(1) to F(0). This Shewanella frigidimarina (strain NCIMB 400) protein is ATP synthase subunit b.